We begin with the raw amino-acid sequence, 953 residues long: Isoleucine--tRNA ligase (953 aa).

A 'HIGH' region motif is present at residues 58 to 68 (PYANGSIHIGH). Position 577 (Glu577) interacts with L-isoleucyl-5'-AMP. The 'KMSKS' region signature appears at 618–622 (KMSKS). Position 621 (Lys621) interacts with ATP. Positions 916, 919, 936, and 939 each coordinate Zn(2+).

This sequence belongs to the class-I aminoacyl-tRNA synthetase family. IleS type 1 subfamily. As to quaternary structure, monomer. It depends on Zn(2+) as a cofactor.

It is found in the cytoplasm. It catalyses the reaction tRNA(Ile) + L-isoleucine + ATP = L-isoleucyl-tRNA(Ile) + AMP + diphosphate. Its function is as follows. Catalyzes the attachment of isoleucine to tRNA(Ile). As IleRS can inadvertently accommodate and process structurally similar amino acids such as valine, to avoid such errors it has two additional distinct tRNA(Ile)-dependent editing activities. One activity is designated as 'pretransfer' editing and involves the hydrolysis of activated Val-AMP. The other activity is designated 'posttransfer' editing and involves deacylation of mischarged Val-tRNA(Ile). The polypeptide is Isoleucine--tRNA ligase (Aeromonas salmonicida (strain A449)).